Reading from the N-terminus, the 239-residue chain is 2',3'-cyclic-nucleotide 3'-phosphodiesterase (239 aa).

Residues H39 and H150 each act as proton donor/acceptor in the active site.

This sequence belongs to the 2H phosphoesterase superfamily. CPD1 family.

The protein localises to the golgi apparatus. The enzyme catalyses ADP-alpha-D-ribose 1'',2''-cyclic phosphate + H2O = ADP-alpha-D-ribose 1''-phosphate + H(+). The catalysed reaction is 2',3'-cyclophospho-AMP + H2O = adenosine 2'-phosphate + H(+). It catalyses the reaction 2',3'-cyclophospho-GMP + H2O = guanosine 2'-phosphate + H(+). It carries out the reaction 2',3'-cyclophospho-UMP + H2O = uridine 2'-phosphate + H(+). The enzyme catalyses 2',3'-cyclophospho-CMP + H2O = cytidine 2'-phosphate + H(+). The catalysed reaction is a nucleoside 2',3'-cyclic phosphate + H2O = a nucleoside 2'-phosphate + H(+). Functionally, involved in the metabolism of ADP-ribose 1',2'-cyclic phosphate which is produced as a consequence of tRNA splicing. The protein is 2',3'-cyclic-nucleotide 3'-phosphodiesterase of Saccharomyces cerevisiae (strain ATCC 204508 / S288c) (Baker's yeast).